We begin with the raw amino-acid sequence, 101 residues long: MIPGEIITLEGDIELNQGQPTVTMRVANTGDRPIQVGSHFHFYEVNAALSFDREKARGQRLDIAAGTAVRFEPGQERDVTLVPIRGHREIYGFRQMIMGKL.

It belongs to the urease beta subunit family. In terms of assembly, heterotrimer of UreA (gamma), UreB (beta) and UreC (alpha) subunits. Three heterotrimers associate to form the active enzyme.

It localises to the cytoplasm. The enzyme catalyses urea + 2 H2O + H(+) = hydrogencarbonate + 2 NH4(+). It functions in the pathway nitrogen metabolism; urea degradation; CO(2) and NH(3) from urea (urease route): step 1/1. Functionally, disruption of the ure1 gene cluster suggests that it protects brucellae during their passage through the stomach. The major route of infection in human brucellosis is oral. This chain is Urease subunit beta 1, found in Brucella abortus (strain 2308).